Here is a 233-residue protein sequence, read N- to C-terminus: Large ribosomal subunit protein uL1 (233 aa).

This sequence belongs to the universal ribosomal protein uL1 family. Part of the 50S ribosomal subunit.

Binds directly to 23S rRNA. The L1 stalk is quite mobile in the ribosome, and is involved in E site tRNA release. In terms of biological role, protein L1 is also a translational repressor protein, it controls the translation of the L11 operon by binding to its mRNA. The protein is Large ribosomal subunit protein uL1 of Shewanella denitrificans (strain OS217 / ATCC BAA-1090 / DSM 15013).